The chain runs to 209 residues: Protease (209 aa).

Residues histidine 60, aspartate 77, and cysteine 127 contribute to the active site.

The protein belongs to the peptidase C5 family. In terms of assembly, interacts with protease cofactor pVI-C; this interaction is necessary for protease activation.

Its subcellular location is the virion. It is found in the host nucleus. It carries out the reaction Cleaves proteins of the adenovirus and its host cell at two consensus sites: -Yaa-Xaa-Gly-Gly-|-Xaa- and -Yaa-Xaa-Gly-Xaa-|-Gly- (in which Yaa is Met, Ile or Leu, and Xaa is any amino acid).. With respect to regulation, requires DNA and protease cofactor for maximal activation. Inside nascent virions, becomes partially activated by binding to the viral DNA, allowing it to cleave the cofactor that binds to the protease and fully activates it. Actin, like the viral protease cofactor, seems to act as a cofactor in the cleavage of cytokeratin 18 and of actin itself. Functionally, cleaves viral precursor proteins (pTP, pIIIa, pVI, pVII, pVIII, and pX) inside newly assembled particles giving rise to mature virions. Protease complexed to its cofactor slides along the viral DNA to specifically locate and cleave the viral precursors. Mature virions have a weakened organization compared to the unmature virions, thereby facilitating subsequent uncoating. Without maturation, the particle lacks infectivity and is unable to uncoat. Late in adenovirus infection, in the cytoplasm, may participate in the cytoskeleton destruction. Cleaves host cell cytoskeletal keratins K7 and K18. The sequence is that of Protease from Homo sapiens (Human).